A 909-amino-acid polypeptide reads, in one-letter code: Zinc finger and BTB domain-containing protein 41 (909 aa).

A BTB domain is found at 88-152 (CDLLIIVEGK…LYTSEFFVYK (65 aa)). The C2H2-type 1 zinc-finger motif lies at 207–230 (HQCKFCSRHFCYKKSLENHLAKTH). Residues 252 to 344 (RSKRNRKCPV…PEAGDSVGNV (93 aa)) are disordered. Residues 266–275 (TSDDEQESGD) show a composition bias toward acidic residues. Basic and acidic residues predominate over residues 284–295 (NFDKEKSDRNDS). Acidic residues predominate over residues 296 to 322 (EDPGSEYNAEEDELEEEMSDEYSDIEE). 13 consecutive C2H2-type zinc fingers follow at residues 361-383 (LQCP…TRVH), 389-411 (FECD…RKKH), 422-445 (HKCP…KRFH), 463-485 (WKCD…MILH), 491-514 (FKCT…EKFH), 518-541 (FPCD…ECTH), 547-569 (WTCF…LRIH), 575-597 (HLCS…LRVH), 603-625 (YECD…KKIH), 631-654 (HQCE…KSVH), 668-690 (HQCD…FRTH), 696-718 (YKCQ…LVIH), and 724-747 (FNCQ…DHVH).

The protein localises to the nucleus. In terms of biological role, may be involved in transcriptional regulation. This Homo sapiens (Human) protein is Zinc finger and BTB domain-containing protein 41 (ZBTB41).